The following is a 336-amino-acid chain: Phosphoribosylformylglycinamidine cyclo-ligase (336 aa).

The protein belongs to the AIR synthase family.

The protein localises to the cytoplasm. It catalyses the reaction 2-formamido-N(1)-(5-O-phospho-beta-D-ribosyl)acetamidine + ATP = 5-amino-1-(5-phospho-beta-D-ribosyl)imidazole + ADP + phosphate + H(+). It participates in purine metabolism; IMP biosynthesis via de novo pathway; 5-amino-1-(5-phospho-D-ribosyl)imidazole from N(2)-formyl-N(1)-(5-phospho-D-ribosyl)glycinamide: step 2/2. The chain is Phosphoribosylformylglycinamidine cyclo-ligase from Thermoanaerobacter sp. (strain X514).